A 106-amino-acid chain; its full sequence is MKRNINLFKCGGDKMYVVVVYDISLDEKGSRNWRKIFGICKRYLHHIQNSVFEGELSEVDIQRLKYEVSKYIRDDLDSFIIFKSRNERWMEKEMLGLQEDKTDNFL.

Mg(2+) is bound at residue Asp22.

Belongs to the CRISPR-associated endoribonuclease Cas2 protein family. In terms of assembly, homodimer, forms a heterotetramer with a Cas1 homodimer. Mg(2+) is required as a cofactor.

In terms of biological role, CRISPR (clustered regularly interspaced short palindromic repeat), is an adaptive immune system that provides protection against mobile genetic elements (viruses, transposable elements and conjugative plasmids). CRISPR clusters contain sequences complementary to antecedent mobile elements and target invading nucleic acids. CRISPR clusters are transcribed and processed into CRISPR RNA (crRNA). Functions as a ssRNA-specific endoribonuclease. Involved in the integration of spacer DNA into the CRISPR cassette. The polypeptide is CRISPR-associated endoribonuclease Cas2 (Fusobacterium nucleatum subsp. nucleatum (strain ATCC 25586 / DSM 15643 / BCRC 10681 / CIP 101130 / JCM 8532 / KCTC 2640 / LMG 13131 / VPI 4355)).